A 499-amino-acid chain; its full sequence is MSFGSEHYLCSSSSYRKVFGDGSRLSARLSGAGGAGGFRSQSLSRSNVASSAACSSASSLGLGLAYRRPPASDGLDLSQAAARTNEYKIIRTNEKEQLQGLNDRFAVFIEKVHQLETQNRALEAELAALRQRHAEPSRVGELFQRELRDLRAQLEEASSARSQALLERDGLAEEVQRLRARCEEESRGREGAERALKAQQRDVDGATLARLDLEKKVESLLDELAFVRQVHDEEVAELLATLQASSQAAAEVDVTVAKPDLTSALREIRAQYESLAAKNLQSAEEWYKSKFANLNEQAARSTEAIRASREEIHEYRRQLQARTIEIEGLRGANESLERQILELEERHSAEVAGYQDSIGQLENDLRNTKSEMARHLREYQDLLNVKMALDIEIAAYRKLLEGEETRFSTSGLSISGLNPLPNPSYLLPPRILSATTSKVSSTGLSLKKEEEEEEASKVASKKTSQIGESFEEILEETVISTKKTEKSNIEETTISSQKI.

The segment at M1–Y87 is head. A Phosphoserine modification is found at S72. Residues K88–L129 are coil 1A. Residues E94–F407 enclose the IF rod domain. The interval R130–L142 is linker 1. Positions F143 to L238 are coil 1B. S219 bears the Phosphoserine mark. The tract at residues L239–T262 is linker 2. Positions S263–S408 are coil 2. The residue at position 290 (K290) is an N6-acetyllysine. Phosphoserine is present on S335. The tail stretch occupies residues T409–I499. Residues S441–I466 are disordered. Phosphoserine occurs at positions 469 and 496.

The protein belongs to the intermediate filament family. As to quaternary structure, forms homodimers (in vitro). Forms heterodimers with NEFL, NEFM or NEFH (in vitro). O-glycosylated. Found predominantly in adult CNS.

In terms of biological role, class-IV neuronal intermediate filament that is able to self-assemble. It is involved in the morphogenesis of neurons. It may form an independent structural network without the involvement of other neurofilaments or it may cooperate with NEFL to form the filamentous backbone to which NEFM and NEFH attach to form the cross-bridges. May also cooperate with the neuronal intermediate filament protein PRPH to form filamentous networks. The sequence is that of Alpha-internexin (INA) from Homo sapiens (Human).